Consider the following 171-residue polypeptide: Co-chaperone protein HscB (171 aa).

In terms of domain architecture, J spans 2-74 (DYFTLFGLPA…LTRAEYLLSL (73 aa)).

The protein belongs to the HscB family. Interacts with HscA and stimulates its ATPase activity. Interacts with IscU.

Functionally, co-chaperone involved in the maturation of iron-sulfur cluster-containing proteins. Seems to help targeting proteins to be folded toward HscA. The chain is Co-chaperone protein HscB from Salmonella schwarzengrund (strain CVM19633).